Here is a 153-residue protein sequence, read N- to C-terminus: Ribonuclease P protein component (153 aa).

Belongs to the RnpA family. Consists of a catalytic RNA component (M1 or rnpB) and a protein subunit.

It catalyses the reaction Endonucleolytic cleavage of RNA, removing 5'-extranucleotides from tRNA precursor.. Its function is as follows. RNaseP catalyzes the removal of the 5'-leader sequence from pre-tRNA to produce the mature 5'-terminus. It can also cleave other RNA substrates such as 4.5S RNA. The protein component plays an auxiliary but essential role in vivo by binding to the 5'-leader sequence and broadening the substrate specificity of the ribozyme. The sequence is that of Ribonuclease P protein component from Helicobacter acinonychis (strain Sheeba).